The chain runs to 122 residues: Large ribosomal subunit protein uL18 (122 aa).

It belongs to the universal ribosomal protein uL18 family. Part of the 50S ribosomal subunit; part of the 5S rRNA/L5/L18/L25 subcomplex. Contacts the 5S and 23S rRNAs.

Functionally, this is one of the proteins that bind and probably mediate the attachment of the 5S RNA into the large ribosomal subunit, where it forms part of the central protuberance. The chain is Large ribosomal subunit protein uL18 from Thermosipho melanesiensis (strain DSM 12029 / CIP 104789 / BI429).